A 131-amino-acid chain; its full sequence is D-ribose pyranase (131 aa).

The active-site Proton donor is the His-20. Residues Asp-28, His-98, and 120-122 (YAN) contribute to the substrate site.

Belongs to the RbsD / FucU family. RbsD subfamily. In terms of assembly, homodecamer.

Its subcellular location is the cytoplasm. It catalyses the reaction beta-D-ribopyranose = beta-D-ribofuranose. It participates in carbohydrate metabolism; D-ribose degradation; D-ribose 5-phosphate from beta-D-ribopyranose: step 1/2. Functionally, catalyzes the interconversion of beta-pyran and beta-furan forms of D-ribose. The sequence is that of D-ribose pyranase from Clostridium tetani (strain Massachusetts / E88).